The primary structure comprises 274 residues: Putative ABC transporter ATP-binding protein MM_1037 (274 aa).

The ABC transporter domain occupies 2–235 (IRLENVSYCY…PSLKDLGLTP (234 aa)). Position 35-42 (35-42 (GRNGSGKS)) interacts with ATP.

This sequence belongs to the ABC transporter superfamily.

The protein resides in the cell membrane. Probably part of an ABC transporter complex. Responsible for energy coupling to the transport system. This is Putative ABC transporter ATP-binding protein MM_1037 from Methanosarcina mazei (strain ATCC BAA-159 / DSM 3647 / Goe1 / Go1 / JCM 11833 / OCM 88) (Methanosarcina frisia).